We begin with the raw amino-acid sequence, 89 residues long: Small ribosomal subunit protein uS15 (89 aa).

Belongs to the universal ribosomal protein uS15 family. Part of the 30S ribosomal subunit. Forms a bridge to the 50S subunit in the 70S ribosome, contacting the 23S rRNA.

Its function is as follows. One of the primary rRNA binding proteins, it binds directly to 16S rRNA where it helps nucleate assembly of the platform of the 30S subunit by binding and bridging several RNA helices of the 16S rRNA. Functionally, forms an intersubunit bridge (bridge B4) with the 23S rRNA of the 50S subunit in the ribosome. This chain is Small ribosomal subunit protein uS15, found in Pasteurella multocida (strain Pm70).